Consider the following 485-residue polypeptide: Noelin (485 aa).

A signal peptide spans 1–16 (MSVPLLKIGVVLSTMA). Asparagine 33, asparagine 103, asparagine 187, asparagine 288, asparagine 307, asparagine 394, asparagine 431, and asparagine 473 each carry an N-linked (GlcNAc...) asparagine glycan. Positions 87-225 (RDARTKQLRQ…ERLRACMQKL (139 aa)) form a coiled coil. Positions 226–478 (ACGKLTGISD…QILYNVTLFH (253 aa)) constitute an Olfactomedin-like domain. Cysteine 227 and cysteine 409 are oxidised to a cystine.

Homotetramer; disulfide-linked. Dimer of dimers, giving rise to a V-shaped homotretramer. Component of the AMPAR complex. Glycosylated.

Its subcellular location is the secreted. It localises to the synapse. It is found in the endoplasmic reticulum. The protein resides in the cell projection. The protein localises to the axon. Its subcellular location is the perikaryon. Functionally, contributes to the regulation of axonal growth. May play an important role in regulating the production of neural crest cells by the neural tube. The chain is Noelin (OLFM1) from Gallus gallus (Chicken).